We begin with the raw amino-acid sequence, 419 residues long: MLNHFPGHCSNNIFCFPPIESETKSGKKASWIICVQVVQHNTIIPITDEMFSTDVKDAVAEIFTKFFVEEGTVRISKMTRITEGKNLGKKNATTVVHQAFKDALSKYNRHARQKRGAHTNRGMIPPMLVKYFNIIPKTFFEEETDPIVQRKRNGVRAVACQQGDGSILLYSRTEKEFLGLDNIKKELKQLYLFIDVRVYLDGELYLHRKPLQWIAGQANAKTDSSELHFYVFDCFWSDQLQMPSNKRQQLLTNIFKQKEDLTFIHQVENFSVKNEDEALRLKAQFIKEGYEGAIVRNVNGPYEPGYNNYHSAHLAKLKPLLDAEFILVDYTQGKKGKDLGAILWVCELPNKKRFVVTPKHLTYADRYALFQKLTPALFKKHLYGKELTVEYAELSPKTGIPLQARAVGFREPINVLEII.

Residues 1–120 (MLNHFPGHCS…ARQKRGAHTN (120 aa)) form an NTD region. The tract at residues 121-317 (RGMIPPMLVK…NYHSAHLAKL (197 aa)) is AD domain. The active-site N6-AMP-lysine intermediate is the lysine 151. Residues lysine 151, glutamate 203, and phenylalanine 232 each coordinate ATP. Position 203 (glutamate 203) interacts with a divalent metal cation. Glutamate 291 serves as a coordination point for a divalent metal cation. The ATP site is built by isoleucine 294 and lysine 316. Positions 318 to 419 (KPLLDAEFIL…REPINVLEII (102 aa)) are OB domain.

It belongs to the ATP-dependent DNA ligase family.

The protein localises to the virion. It catalyses the reaction ATP + (deoxyribonucleotide)n-3'-hydroxyl + 5'-phospho-(deoxyribonucleotide)m = (deoxyribonucleotide)n+m + AMP + diphosphate.. In terms of biological role, very low-fidelity DNA ligase that seals nicks in double-stranded DNA during DNA repair. Together with the viral repair DNA polymerase X, fills the single nucleotide gaps generated by the AP endonuclease. It is not essential for viral replication and recombination. Displays a very low adenylation activity towards DNA with 3'-dideoxy- or 3'-amino-terminated nicks compared to regular nick DNA. In African swine fever virus (isolate Tick/South Africa/Pretoriuskop Pr4/1996) (ASFV), this protein is DNA ligase.